Reading from the N-terminus, the 59-residue chain is Putative potassium channel toxin Ts22 (59 aa).

The signal sequence occupies residues 1 to 22 (MKAFYGILIIFILISMIDLSQQ). Cystine bridges form between Cys29/Cys50, Cys35/Cys55, and Cys39/Cys57.

This sequence belongs to the short scorpion toxin superfamily. Potassium channel inhibitor family. Alpha-KTx 04 subfamily. Expressed by the venom gland.

The protein resides in the secreted. Its function is as follows. Potently blocks voltage-gated potassium channels (Kv). In Tityus serrulatus (Brazilian scorpion), this protein is Putative potassium channel toxin Ts22.